We begin with the raw amino-acid sequence, 290 residues long: Nitrogenase iron protein 2 (290 aa).

10–17 (GKGGIGKS) is a binding site for ATP. Position 98 (Cys-98) interacts with [4Fe-4S] cluster. Arg-101 is subject to ADP-ribosylarginine; by dinitrogenase reductase ADP-ribosyltransferase. Cys-133 contributes to the [4Fe-4S] cluster binding site.

The protein belongs to the NifH/BchL/ChlL family. In terms of assembly, homodimer. The cofactor is [4Fe-4S] cluster. Post-translationally, the reversible ADP-ribosylation of Arg-101 inactivates the nitrogenase reductase and regulates nitrogenase activity.

It carries out the reaction N2 + 8 reduced [2Fe-2S]-[ferredoxin] + 16 ATP + 16 H2O = H2 + 8 oxidized [2Fe-2S]-[ferredoxin] + 2 NH4(+) + 16 ADP + 16 phosphate + 6 H(+). In terms of biological role, the key enzymatic reactions in nitrogen fixation are catalyzed by the nitrogenase complex, which has 2 components: the iron protein (component 2) and a component 1 which is either a molybdenum-iron protein, a vanadium-iron, or an iron-iron protein. This is Nitrogenase iron protein 2 (vnfH) from Azotobacter chroococcum mcd 1.